The chain runs to 567 residues: Cytochrome P450 monooxygenase 231 (567 aa).

Residues 3–23 (VSTNELAILAIVLLATGVLFY) form a helical membrane-spanning segment. 2 N-linked (GlcNAc...) asparagine glycosylation sites follow: asparagine 81 and asparagine 223. Residue cysteine 475 participates in heme binding.

The protein belongs to the cytochrome P450 family. Requires heme as cofactor.

It localises to the membrane. It functions in the pathway secondary metabolite biosynthesis. Its function is as follows. Cytochrome P450 monooxygenase that is able to use anthracene, carbazole, pyrene, and phenanthrene as substrates for oxidation. These multifunctional properties against a series of polycyclic aromatic hydrocarbons (PAHs) suggest that CYP231 would play important roles, at least in part, in fungal metabolic systems involved in xenobiotic detoxification. The polypeptide is Cytochrome P450 monooxygenase 231 (Postia placenta (strain ATCC 44394 / Madison 698-R) (Brown rot fungus)).